A 345-amino-acid polypeptide reads, in one-letter code: NADH-quinone oxidoreductase subunit H (345 aa).

Helical transmembrane passes span 14–34, 84–104, 115–135, 161–181, 187–207, 248–268, 277–297, and 309–329; these read IILAQVLAVVAFVMISLLFLV, FILAPMTSFVLAMIAWAVIPF, VAILYVFAVSSLEVYGVIMGG, IGLIIIGVILSTGSMNFGDIV, GWGFFGWYWLPHFPMVFLFFI, YIAIFLMCALTSLLFFGGWLS, VLWMVAKMAFFFFIFAMVKAI, and LGWKVFLPFSLVWVVFVAFAA.

This sequence belongs to the complex I subunit 1 family. As to quaternary structure, NDH-1 is composed of 14 different subunits. Subunits NuoA, H, J, K, L, M, N constitute the membrane sector of the complex.

The protein resides in the cell inner membrane. It catalyses the reaction a quinone + NADH + 5 H(+)(in) = a quinol + NAD(+) + 4 H(+)(out). Its function is as follows. NDH-1 shuttles electrons from NADH, via FMN and iron-sulfur (Fe-S) centers, to quinones in the respiratory chain. The immediate electron acceptor for the enzyme in this species is believed to be ubiquinone. Couples the redox reaction to proton translocation (for every two electrons transferred, four hydrogen ions are translocated across the cytoplasmic membrane), and thus conserves the redox energy in a proton gradient. This subunit may bind ubiquinone. The chain is NADH-quinone oxidoreductase subunit H from Ruegeria pomeroyi (strain ATCC 700808 / DSM 15171 / DSS-3) (Silicibacter pomeroyi).